Here is a 363-residue protein sequence, read N- to C-terminus: Phosphoribosylformylglycinamidine cyclo-ligase (363 aa).

The protein belongs to the AIR synthase family.

The protein resides in the cytoplasm. It catalyses the reaction 2-formamido-N(1)-(5-O-phospho-beta-D-ribosyl)acetamidine + ATP = 5-amino-1-(5-phospho-beta-D-ribosyl)imidazole + ADP + phosphate + H(+). Its pathway is purine metabolism; IMP biosynthesis via de novo pathway; 5-amino-1-(5-phospho-D-ribosyl)imidazole from N(2)-formyl-N(1)-(5-phospho-D-ribosyl)glycinamide: step 2/2. In Bartonella tribocorum (strain CIP 105476 / IBS 506), this protein is Phosphoribosylformylglycinamidine cyclo-ligase.